The sequence spans 90 residues: UPF0297 protein lwe1516 (90 aa).

Belongs to the UPF0297 family.

The chain is UPF0297 protein lwe1516 from Listeria welshimeri serovar 6b (strain ATCC 35897 / DSM 20650 / CCUG 15529 / CIP 8149 / NCTC 11857 / SLCC 5334 / V8).